The following is a 314-amino-acid chain: 4-hydroxy-3-methylbut-2-enyl diphosphate reductase (314 aa).

[4Fe-4S] cluster is bound at residue Cys-12. Positions 41 and 74 each coordinate (2E)-4-hydroxy-3-methylbut-2-enyl diphosphate. Positions 41 and 74 each coordinate dimethylallyl diphosphate. His-41 and His-74 together coordinate isopentenyl diphosphate. Cys-96 contributes to the [4Fe-4S] cluster binding site. A (2E)-4-hydroxy-3-methylbut-2-enyl diphosphate-binding site is contributed by His-124. Dimethylallyl diphosphate is bound at residue His-124. Residue His-124 participates in isopentenyl diphosphate binding. The Proton donor role is filled by Glu-126. Thr-167 contacts (2E)-4-hydroxy-3-methylbut-2-enyl diphosphate. Position 197 (Cys-197) interacts with [4Fe-4S] cluster. (2E)-4-hydroxy-3-methylbut-2-enyl diphosphate is bound by residues Ser-225, Ser-226, Asn-227, and Ser-269. Dimethylallyl diphosphate contacts are provided by Ser-225, Ser-226, Asn-227, and Ser-269. Residues Ser-225, Ser-226, Asn-227, and Ser-269 each coordinate isopentenyl diphosphate.

It belongs to the IspH family. Requires [4Fe-4S] cluster as cofactor.

The enzyme catalyses isopentenyl diphosphate + 2 oxidized [2Fe-2S]-[ferredoxin] + H2O = (2E)-4-hydroxy-3-methylbut-2-enyl diphosphate + 2 reduced [2Fe-2S]-[ferredoxin] + 2 H(+). It catalyses the reaction dimethylallyl diphosphate + 2 oxidized [2Fe-2S]-[ferredoxin] + H2O = (2E)-4-hydroxy-3-methylbut-2-enyl diphosphate + 2 reduced [2Fe-2S]-[ferredoxin] + 2 H(+). The protein operates within isoprenoid biosynthesis; dimethylallyl diphosphate biosynthesis; dimethylallyl diphosphate from (2E)-4-hydroxy-3-methylbutenyl diphosphate: step 1/1. Its pathway is isoprenoid biosynthesis; isopentenyl diphosphate biosynthesis via DXP pathway; isopentenyl diphosphate from 1-deoxy-D-xylulose 5-phosphate: step 6/6. Its function is as follows. Catalyzes the conversion of 1-hydroxy-2-methyl-2-(E)-butenyl 4-diphosphate (HMBPP) into a mixture of isopentenyl diphosphate (IPP) and dimethylallyl diphosphate (DMAPP). Acts in the terminal step of the DOXP/MEP pathway for isoprenoid precursor biosynthesis. This is 4-hydroxy-3-methylbut-2-enyl diphosphate reductase from Aliivibrio fischeri (strain MJ11) (Vibrio fischeri).